Here is a 530-residue protein sequence, read N- to C-terminus: Carbohydrate sulfotransferase 2 (530 aa).

The Cytoplasmic portion of the chain corresponds to 1–54 (MSRSPQRALPPGALPRLLQAAPAAAPRALLPQWPRRPGRRWPASPLGMKVFRRK). Residues 55 to 75 (ALVLCAGYALLLVLTMLNLLD) form a helical; Signal-anchor for type II membrane protein membrane-spanning segment. Residues 76–530 (YKWHKEPLQQ…SKTLLRKPRL (455 aa)) are Lumenal-facing. Residues 89 to 119 (DGPLGAAAGAAGGSWGRPGPPPAGPPRAHAR) form a disordered region. A 3'-phosphoadenylyl sulfate-binding site is contributed by 173–179 (WRSGSSF). N243 is a glycosylation site (N-linked (GlcNAc...) asparagine). Residue 332–340 (RDPRAVASS) participates in 3'-phosphoadenylyl sulfate binding. N-linked (GlcNAc...) asparagine glycans are attached at residues N457 and N475.

It belongs to the sulfotransferase 1 family. Gal/GlcNAc/GalNAc subfamily. Homodimer; disulfide-linked. Homodimerization is not essential for enzyme activity. Glycosylation at Asn-475 is required for catalytic activity. In terms of tissue distribution, widely expressed. Highly expressed in bone marrow, peripheral blood leukocytes, spleen, brain, spinal cord, ovary and placenta. Expressed by high endothelial cells (HEVs) and leukocytes.

It localises to the golgi apparatus. Its subcellular location is the trans-Golgi network membrane. The enzyme catalyses 3-O-{N-acetyl-beta-D-glucosaminyl-(1-&gt;3)-beta-D-galactosyl-(1-&gt;3)-N-acetyl-alpha-D-galactosaminyl}-L-threonyl-[protein] + 3'-phosphoadenylyl sulfate = 3-O-{6-O-sulfo-N-acetyl-beta-D-glucosaminyl-(1-&gt;3)-beta-D-galactosyl-(1-&gt;3)-N-acetyl-alpha-D-galactosaminyl}-L-threonyl-[protein] + adenosine 3',5'-bisphosphate + H(+). The catalysed reaction is 3-O-{N-acetyl-beta-D-glucosaminyl-(1-&gt;3)-beta-D-galactosyl-(1-&gt;3)-N-acetyl-alpha-D-galactosaminyl}-L-seryl-[protein] + 3'-phosphoadenylyl sulfate = 3-O-{6-O-sulfo-N-acetyl-beta-D-glucosaminyl-(1-&gt;3)-beta-D-galactosyl-(1-&gt;3)-N-acetyl-alpha-D-galactosaminyl}-L-seryl-[protein] + adenosine 3',5'-bisphosphate + H(+). It catalyses the reaction a 3-O-{beta-D-galactosyl-(1-&gt;3)-[N-acetyl-beta-D-glucosaminyl-(1-&gt;6)]-N-acetyl-alpha-D-galactosaminyl}-L-threonyl-[protein] + 3'-phosphoadenylyl sulfate = 3-O-{beta-D-galactosyl-(1-&gt;3)-[6-O-sulfo-N-acetyl-beta-D-glucosaminyl-(1-&gt;6)]-N-acetyl-alpha-D-galactosaminyl}-L-threonyl-[protein] + adenosine 3',5'-bisphosphate + H(+). It carries out the reaction 3-O-{beta-D-galactosyl-(1-&gt;3)-[N-acetyl-beta-D-glucosaminyl-(1-&gt;6)]-N-acetyl-alpha-D-galactosaminyl}-L-seryl-[protein] + 3'-phosphoadenylyl sulfate = 3-O-{beta-D-galactosyl-(1-&gt;3)-[6-O-sulfo-N-acetyl-beta-D-glucosaminyl-(1-&gt;6)]-N-acetyl-alpha-D-galactosaminyl}-L-seryl-[protein] + adenosine 3',5'-bisphosphate + H(+). It functions in the pathway protein modification; carbohydrate sulfation. Its function is as follows. Sulfotransferase that utilizes 3'-phospho-5'-adenylyl sulfate (PAPS) as sulfonate donor to catalyze the transfer of sulfate to position 6 of non-reducing N-acetylglucosamine (GlcNAc) residues within keratan-like structures on N-linked glycans and within mucin-associated glycans that can ultimately serve as SELL ligands. SELL ligands are present in high endothelial cells (HEVs) and play a central role in lymphocyte homing at sites of inflammation. Participates in biosynthesis of the SELL ligand sialyl 6-sulfo Lewis X and in lymphocyte homing to Peyer patches. Has no activity toward O-linked sugars. Its substrate specificity may be influenced by its subcellular location. Sulfates GlcNAc residues at terminal, non-reducing ends of oligosaccharide chains. The polypeptide is Carbohydrate sulfotransferase 2 (CHST2) (Homo sapiens (Human)).